The sequence spans 153 residues: Phosphoribosyl-AMP cyclohydrolase (153 aa).

Asp93 contributes to the Mg(2+) binding site. A Zn(2+)-binding site is contributed by Cys94. Positions 95 and 97 each coordinate Mg(2+). Residues Cys112 and Cys119 each coordinate Zn(2+).

Belongs to the PRA-CH family. As to quaternary structure, homodimer. Requires Mg(2+) as cofactor. The cofactor is Zn(2+).

It localises to the cytoplasm. The catalysed reaction is 1-(5-phospho-beta-D-ribosyl)-5'-AMP + H2O = 1-(5-phospho-beta-D-ribosyl)-5-[(5-phospho-beta-D-ribosylamino)methylideneamino]imidazole-4-carboxamide. It participates in amino-acid biosynthesis; L-histidine biosynthesis; L-histidine from 5-phospho-alpha-D-ribose 1-diphosphate: step 3/9. In terms of biological role, catalyzes the hydrolysis of the adenine ring of phosphoribosyl-AMP. This Mesorhizobium japonicum (strain LMG 29417 / CECT 9101 / MAFF 303099) (Mesorhizobium loti (strain MAFF 303099)) protein is Phosphoribosyl-AMP cyclohydrolase.